An 837-amino-acid polypeptide reads, in one-letter code: Protein TRANSPARENT TESTA 9 (837 aa).

The region spanning 42 to 192 (LRSIAEILTY…AVRALTLNVY (151 aa)) is the FPL domain. The segment at 366–386 (TEEANQQCSSTAAGMSDDGNS) is disordered. A compositionally biased stretch (polar residues) spans 368–378 (EANQQCSSTAA).

Belongs to the CLEC16A/gop-1 family.

The protein localises to the golgi apparatus membrane. Its function is as follows. Involved in membrane trafficking and vacuole development through membrane fusion at the vacuole. Required for membrane trafficking machinery and accumulation of flavonoids in the seed coat. This is Protein TRANSPARENT TESTA 9 from Arabidopsis thaliana (Mouse-ear cress).